The sequence spans 260 residues: Acetyl-coenzyme A carboxylase carboxyl transferase subunit alpha (260 aa).

The 235-residue stretch at 1-235 (MSAYDKVMAA…SNKILHSINK (235 aa)) folds into the CoA carboxyltransferase C-terminal domain.

It belongs to the AccA family. As to quaternary structure, acetyl-CoA carboxylase is a heterohexamer composed of biotin carboxyl carrier protein (AccB), biotin carboxylase (AccC) and two subunits each of ACCase subunit alpha (AccA) and ACCase subunit beta (AccD).

It is found in the cytoplasm. The enzyme catalyses N(6)-carboxybiotinyl-L-lysyl-[protein] + acetyl-CoA = N(6)-biotinyl-L-lysyl-[protein] + malonyl-CoA. Its pathway is lipid metabolism; malonyl-CoA biosynthesis; malonyl-CoA from acetyl-CoA: step 1/1. Functionally, component of the acetyl coenzyme A carboxylase (ACC) complex. First, biotin carboxylase catalyzes the carboxylation of biotin on its carrier protein (BCCP) and then the CO(2) group is transferred by the carboxyltransferase to acetyl-CoA to form malonyl-CoA. The polypeptide is Acetyl-coenzyme A carboxylase carboxyl transferase subunit alpha (Ruminiclostridium cellulolyticum (strain ATCC 35319 / DSM 5812 / JCM 6584 / H10) (Clostridium cellulolyticum)).